Here is a 125-residue protein sequence, read N- to C-terminus: MRHLFKLLFLYMQLNLLFYIPNKKSFLQLGEEKVYLTFQNSNTNLNIPYDSLLHKLNSDKNVFSKESYDNWSSFRQLIIDKYGRIQGILTESSKNSNLKNSIQLNNYLLQKTIYYEFLCIEFQLY.

The protein localises to the plastid. It is found in the chloroplast. This is an uncharacterized protein from Guillardia theta (Cryptophyte).